The sequence spans 492 residues: N-succinylglutamate 5-semialdehyde dehydrogenase (492 aa).

An NAD(+)-binding site is contributed by 225–230 (GSSNTG). Active-site residues include glutamate 248 and cysteine 282.

Belongs to the aldehyde dehydrogenase family. AstD subfamily.

The catalysed reaction is N-succinyl-L-glutamate 5-semialdehyde + NAD(+) + H2O = N-succinyl-L-glutamate + NADH + 2 H(+). The protein operates within amino-acid degradation; L-arginine degradation via AST pathway; L-glutamate and succinate from L-arginine: step 4/5. In terms of biological role, catalyzes the NAD-dependent reduction of succinylglutamate semialdehyde into succinylglutamate. This Colwellia psychrerythraea (strain 34H / ATCC BAA-681) (Vibrio psychroerythus) protein is N-succinylglutamate 5-semialdehyde dehydrogenase.